Consider the following 250-residue polypeptide: Dihydroorotate dehydrogenase B (NAD(+)), electron transfer subunit (250 aa).

The 94-residue stretch at 1-94 (MKVVAQEEIA…MGPQGNGFDL (94 aa)) folds into the FAD-binding FR-type domain. FAD is bound by residues 45–48 (RPIS), 62–64 (IYR), and 69–70 (GT). [2Fe-2S] cluster-binding residues include Cys214, Cys219, Cys222, and Cys237.

It belongs to the PyrK family. In terms of assembly, heterotetramer of 2 PyrK and 2 PyrD type B subunits. [2Fe-2S] cluster serves as cofactor. FAD is required as a cofactor.

It participates in pyrimidine metabolism; UMP biosynthesis via de novo pathway; orotate from (S)-dihydroorotate (NAD(+) route): step 1/1. Its function is as follows. Responsible for channeling the electrons from the oxidation of dihydroorotate from the FMN redox center in the PyrD type B subunit to the ultimate electron acceptor NAD(+). The chain is Dihydroorotate dehydrogenase B (NAD(+)), electron transfer subunit from Streptococcus pneumoniae serotype 4 (strain ATCC BAA-334 / TIGR4).